The chain runs to 257 residues: UPF0246 protein Shew185_1115 (257 aa).

The protein belongs to the UPF0246 family.

This is UPF0246 protein Shew185_1115 from Shewanella baltica (strain OS185).